A 250-amino-acid polypeptide reads, in one-letter code: MQISSRSGFGYFSYGIRLALTPGIRRFVVLPLLANIILVGGAMYYLFSHLDTWISEWIGQLPSFLSWLSYVLWPLLALTILATFSYFFSTLANFIASPFNGLLAEKVEQHLSGERIGEEGVWALVKDVPRILSREWRKLLYVLPKALGLFLLLLIPALGQTLGPIAWFLFTAWMLAIQYCDYPFDNHKISFHDMRNTLKQNQSKAYGFGMLVAFFTSIPIVNLFIVPVAVCGATAMWVMEFKTQHSPLRQ.

A run of 4 helical transmembrane segments spans residues 27-47, 64-84, 150-170, and 210-230; these read FVVL…YYLF, FLSW…LATF, FLLL…WFLF, and MLVA…PVAV.

This sequence belongs to the CysZ family.

The protein localises to the cell inner membrane. Its function is as follows. High affinity, high specificity proton-dependent sulfate transporter, which mediates sulfate uptake. Provides the sulfur source for the cysteine synthesis pathway. The chain is Sulfate transporter CysZ from Vibrio cholerae serotype O1 (strain ATCC 39541 / Classical Ogawa 395 / O395).